A 397-amino-acid chain; its full sequence is L-cysteine desulfidase (397 aa).

Cys-23 functions as the Proton acceptor in the catalytic mechanism. [4Fe-4S] cluster is bound by residues Cys-288, Cys-330, and Cys-337.

This sequence belongs to the L-cysteine desulfidase family. In terms of assembly, homotrimer. It depends on [4Fe-4S] cluster as a cofactor.

It carries out the reaction L-cysteine + H2O = hydrogen sulfide + pyruvate + NH4(+) + H(+). Functionally, catalyzes the cleavage of L-cysteine to form 2-aminoprop-2-enoate and sulfide. The former then spontaneously hydrolyzes to pyruvate and NH(3). May be responsible for the production of sulfide required for the biosynthesis of iron-sulfur centers in this archaea. The sequence is that of L-cysteine desulfidase from Methanococcus maripaludis (strain C5 / ATCC BAA-1333).